The chain runs to 783 residues: MKIKTILTPVTCALLISFSAHAANADNYKNVINRTGAPQYMKDYDYDDHQRFNPFFDLGAWHGHLLPDGPNTMGGFPGVALLTEEYINFMASNFDRLTVWQDGKKVDFTLEAYSIPGALVQKLTAKDVQVEMTLRFATPRTSLLETKITSNKPLDLVWDGELLEKLEAKEGKPLSDKTIAGEYPDYQRKISATRDGLKVTFGKVRATWDLLTSGESEYQVHKSLPVQTEINGNRFTSKAHINGSTTLYTTYSHLLTAQEVSKEQMQIRDILARPAFYLTASQQRWEEYLKKGLTNPDATPEQTRVAVKAIETLNGNWRSPGGAVKFNTVTPSVTGRWFSGNQTWPWDTWKQAFAMAHFNPDIAKENIRAVFSWQIQPGDSVRPQDVGFVPDLIAWNLSPERGGDGGNWNERNTKPSLAAWSVMEVYNVTQDKTWVAEMYPKLVAYHDWWLRNRDHNGNGVPEYGATRDKAHNTESGEMLFTVKKGDKEETQSGLNNYARVVEKGQYDSLEIPAQVAASWESGRDDAAVFGFIDKEQLDKYVANGGKRSDWTVKFAENRSQDGTLLGYSLLQESVDQASYMYSDNHYLAEMATILGKPEEAKRYRQLAQQLADYINTCMFDPTTQFYYDVRIEDKPLANGCAGKPIVERGKGPEGWSPLFNGAATQANADAVVKVMLDPKEFNTFVPLGTAALTNPAFGADIYWRGRVWVDQFWFGLKGMERYGYRDDALKLADTFFRHAKGLTADGPIQENYNPLTGAQQGAPNFSWSAAHLYMLYNDFFRKQ.

The signal sequence occupies residues 1-22 (MKIKTILTPVTCALLISFSAHA). Residues 24 to 254 (NADNYKNVIN…TTLYTTYSHL (231 aa)) are N-terminal domain. Residues 254–299 (LLTAQEVSKEQMQIRDILARPAFYLTASQQRWEEYLKKGLTNPDAT) are linker. The interval 300–783 (PEQTRVAVKA…MLYNDFFRKQ (484 aa)) is a domain. 5 residues coordinate Ca(2+): Asp454, Asn456, Asn458, Val460, and Glu462. The active-site Proton donor is Asp524. Glu572 provides a ligand contact to Ca(2+). Glu750 acts as the Proton acceptor in catalysis.

This sequence belongs to the glycosyl hydrolase 63 family.

Functionally, glucoside hydrolase that cleaves the alpha-1,3-glucosidic linkage in nigerose. Has very low activity towards maltooligosaccharides, soluble starch, nigerotriose, kojibiose and trehalose. The chain is Glucosidase YgjK (ygjK) from Escherichia coli (strain K12).